Reading from the N-terminus, the 1073-residue chain is Probable inorganic carbon transporter subunit DabA 2 (1073 aa).

Over residues 1-20 (MSSGNTSSQNHSPVNNQPTR) the composition is skewed to polar residues. A disordered region spans residues 1–35 (MSSGNTSSQNHSPVNNQPTRLKSPLPALHKDTQPN). Cys535, Asp537, His721, and Cys736 together coordinate Zn(2+).

The protein belongs to the inorganic carbon transporter (TC 9.A.2) DabA family. Forms a complex with DabB. It depends on Zn(2+) as a cofactor.

It is found in the cell inner membrane. Part of an energy-coupled inorganic carbon pump. The chain is Probable inorganic carbon transporter subunit DabA 2 from Rhodopirellula baltica (strain DSM 10527 / NCIMB 13988 / SH1).